The chain runs to 178 residues: Hypoxanthine-guanine phosphoribosyltransferase (178 aa).

Diphosphate contacts are provided by Lys46 and Gly47. A Mg(2+)-binding site is contributed by Asp103. Residue Asp106 is the Proton acceptor of the active site. GMP contacts are provided by residues Lys134, 155-156 (FL), and Asp162. Arg168 serves as a coordination point for diphosphate.

Belongs to the purine/pyrimidine phosphoribosyltransferase family. Mg(2+) is required as a cofactor.

The protein resides in the cytoplasm. The enzyme catalyses IMP + diphosphate = hypoxanthine + 5-phospho-alpha-D-ribose 1-diphosphate. The catalysed reaction is GMP + diphosphate = guanine + 5-phospho-alpha-D-ribose 1-diphosphate. It functions in the pathway purine metabolism; IMP biosynthesis via salvage pathway; IMP from hypoxanthine: step 1/1. Its pathway is purine metabolism; GMP biosynthesis via salvage pathway; GMP from guanine: step 1/1. Functionally, purine salvage pathway enzyme that catalyzes the transfer of the ribosyl-5-phosphate group from 5-phospho-alpha-D-ribose 1-diphosphate (PRPP) to the N9 position of the 6-oxopurines hypoxanthine and guanine to form the corresponding ribonucleotides IMP (inosine 5'-monophosphate) and GMP (guanosine 5'-monophosphate), with the release of PPi. The chain is Hypoxanthine-guanine phosphoribosyltransferase (hpt) from Aquifex aeolicus (strain VF5).